Consider the following 396-residue polypeptide: Elongation factor Tu (396 aa).

Residues 11–205 form the tr-type G domain; sequence KPHVNIGTIG…VVDEYIPTPK (195 aa). Residues 20–27 form a G1 region; that stretch reads GHVDHGKT. Residue 20–27 participates in GTP binding; it reads GHVDHGKT. Threonine 27 serves as a coordination point for Mg(2+). Residues 61-65 are G2; the sequence is GITIN. The G3 stretch occupies residues 82 to 85; sequence DAPG. GTP contacts are provided by residues 82–86 and 137–140; these read DAPGH and NKTD. The G4 stretch occupies residues 137-140; it reads NKTD. The segment at 175–177 is G5; it reads SAL.

Belongs to the TRAFAC class translation factor GTPase superfamily. Classic translation factor GTPase family. EF-Tu/EF-1A subfamily. In terms of assembly, monomer.

The protein resides in the cytoplasm. It carries out the reaction GTP + H2O = GDP + phosphate + H(+). In terms of biological role, GTP hydrolase that promotes the GTP-dependent binding of aminoacyl-tRNA to the A-site of ribosomes during protein biosynthesis. This is Elongation factor Tu from Limosilactobacillus fermentum (strain NBRC 3956 / LMG 18251) (Lactobacillus fermentum).